Reading from the N-terminus, the 455-residue chain is La-related protein 6C (455 aa).

Over residues 1–20 (MAQMQREEVESVTTEKKRLD) the composition is skewed to basic and acidic residues. The disordered stretch occupies residues 1–29 (MAQMQREEVESVTTEKKRLDGGGGSSGAQ). In terms of domain architecture, HTH La-type RNA-binding spans 138 to 229 (NLLSDDLRLK…KRTSQFTDRD (92 aa)). The 89-residue stretch at 236–324 (RTVVAENLPD…KGLRVRLLLR (89 aa)) folds into the RRM domain. 2 disordered regions span residues 348–396 (SYES…YAVG) and 414–455 (SLGS…PNNL).

It localises to the nucleus. Functionally, transcriptional regulator. The sequence is that of La-related protein 6C (LARP6C) from Arabidopsis thaliana (Mouse-ear cress).